Reading from the N-terminus, the 129-residue chain is DNA-directed RNA polymerase subunit omega (129 aa).

The interval 76 to 101 (EVDEPEPDPVTLAASAADGEDDDQPE) is disordered.

It belongs to the RNA polymerase subunit omega family. The RNAP catalytic core consists of 2 alpha, 1 beta, 1 beta' and 1 omega subunit. When a sigma factor is associated with the core the holoenzyme is formed, which can initiate transcription.

The catalysed reaction is RNA(n) + a ribonucleoside 5'-triphosphate = RNA(n+1) + diphosphate. Its function is as follows. Promotes RNA polymerase assembly. Latches the N- and C-terminal regions of the beta' subunit thereby facilitating its interaction with the beta and alpha subunits. This chain is DNA-directed RNA polymerase subunit omega, found in Agrobacterium fabrum (strain C58 / ATCC 33970) (Agrobacterium tumefaciens (strain C58)).